Reading from the N-terminus, the 89-residue chain is Neurotoxin beta-KTx 12 (89 aa).

A signal peptide spans 1 to 20 (MKQYIFFLALIVLVSTFAEA). The propeptide occupies 21–39 (GKKTEILDKVKKVFSKAKD). Positions 53–89 (ELGCPFIDKWCEDHCESKKLVGKCENFDCSCVKLGGK) constitute a BetaSPN-type CS-alpha/beta domain. Cystine bridges form between C56/C76, C63/C81, and C67/C83.

It belongs to the long chain scorpion toxin family. Class 2 subfamily. As to expression, expressed by the venom gland.

The protein localises to the secreted. Inhibits voltage-gated potassium channel. This is Neurotoxin beta-KTx 12 from Lychas mucronatus (Chinese swimming scorpion).